The chain runs to 416 residues: MNTYGWDIVYGCSKRVVNKHLKEYITKNNIQFLYSNIDKKQEIKMVFDNWEIINGGSSNFLRIKTPIKEGYFKVRNTTVDLSGINPVLEIKLDFFNDISNPNIKELKFNFGSESNDDIKIIVSDLNGNLQEEDEFYFNKLLINAFIQNEKQISYIFASLNVTSDIEWMNPKQFKFVYYSPTDNSDGYLFILSVVTNRDISKLSANVDGNILGNNSEVGLLISEKLFLQNMVLSRLSSNMGSNINKNNFEVISTSDTTGRIVNNSTLNWYGLKVAALYYYPKINNFSMQLFEGNKLKISLRGLVRLTGLEAVYSDFEIQSINKFVYNSTNKKAYFEVDKNPTSSYKYHLFPGDLISLAVLSSVTHWSIKSIEGALGFELINNFVDLINNTIKWNNLKISQVTNVTLNVGFCIQGNAN.

Belongs to the TULIP P47 family. As to quaternary structure, part of a crude toxin extract that includes BoNTA2/NTNH, P47, OrfX2 and OrfX3; OrfX1 was not detected.

Functionally, part of a botulinum neurotoxin type A2 (BoNT) locus; may be part of a progenitor toxin complex required to protect BoNT during its passage through the host gastrointestinal tract. The sequence is that of Protein P47 from Clostridium botulinum (strain Kyoto / Type A2).